Here is a 220-residue protein sequence, read N- to C-terminus: Claudin-24 (220 aa).

At 1–10 the chain is on the cytoplasmic side; that stretch reads MALIFRTAMQ. Residues 11–31 form a helical membrane-spanning segment; the sequence is SVGLLLSLLGWILSIITTYLP. Residues 32–81 are Extracellular-facing; it reads HWKNLNLDLNEMENWTMGLWQTCVIQEEVGMQCKDFDSFLALPAELRVSR. The helical transmembrane segment at 82–102 threads the bilayer; that stretch reads ILMFLSNGLGFLGLLVSGFGL. The Cytoplasmic segment spans residues 103-117; it reads DCLRIGESQRDLKRR. A helical membrane pass occupies residues 118–138; it reads LLILGGILSWASGITALVPVS. Topologically, residues 139-161 are extracellular; that stretch reads WVAHKTVQEFWDENVPDFVPRWE. Residues 162–182 traverse the membrane as a helical segment; sequence FGEALFLGWFAGLSLLLGGCL. Residues 183-220 lie on the Cytoplasmic side of the membrane; the sequence is LNCAACSSHAPLALGHYAVAQMQTQCPYLEDGTADPQV.

It belongs to the claudin family.

The protein resides in the cell junction. Its subcellular location is the tight junction. The protein localises to the cell membrane. Functionally, plays a major role in tight junction-specific obliteration of the intercellular space, through calcium-independent cell-adhesion activity. This Homo sapiens (Human) protein is Claudin-24.